The following is a 268-amino-acid chain: L-gamma-glutamyl-L-propargylglycine hydroxylase (268 aa).

Fe(2+) serves as cofactor.

The enzyme catalyses L-gamma-glutamyl-L-propargylglycine + 2-oxoglutarate + O2 = L-gamma-glutamyl-(3R)-L-beta-ethynylserine + succinate + CO2. The protein operates within amino-acid metabolism. Its pathway is antibiotic biosynthesis. Its function is as follows. Involved in the biosynthesis of terminal alkyne-containing amino acids such as L-beta-ethynylserine, that are produced as antibiotics by S.cattleya. Catalyzes the hydroxylation of the dipeptide L-gamma-glutamyl-L-propargylglycine, leading to L-gamma-glutamyl-L-beta-ethynylserine. Cannot use L-propargylglycine as substrate. The polypeptide is L-gamma-glutamyl-L-propargylglycine hydroxylase (Streptantibioticus cattleyicolor (strain ATCC 35852 / DSM 46488 / JCM 4925 / NBRC 14057 / NRRL 8057) (Streptomyces cattleya)).